The sequence spans 402 residues: S-adenosylmethionine synthase (402 aa).

His15 is an ATP binding site. Asp17 serves as a coordination point for Mg(2+). K(+) is bound at residue Glu43. Residues Glu56 and Gln99 each contribute to the L-methionine site. Residues 99 to 109 (QSPDIAQGVDT) form a flexible loop region. Residues 174-176 (DGK), 247-248 (RF), Asp256, 262-263 (RK), Ala279, and Lys283 each bind ATP. Asp256 is a binding site for L-methionine. Lys287 lines the L-methionine pocket.

Belongs to the AdoMet synthase family. In terms of assembly, homotetramer; dimer of dimers. Requires Mg(2+) as cofactor. K(+) serves as cofactor.

It localises to the cytoplasm. It carries out the reaction L-methionine + ATP + H2O = S-adenosyl-L-methionine + phosphate + diphosphate. The protein operates within amino-acid biosynthesis; S-adenosyl-L-methionine biosynthesis; S-adenosyl-L-methionine from L-methionine: step 1/1. Catalyzes the formation of S-adenosylmethionine (AdoMet) from methionine and ATP. The overall synthetic reaction is composed of two sequential steps, AdoMet formation and the subsequent tripolyphosphate hydrolysis which occurs prior to release of AdoMet from the enzyme. In Streptomyces griseus subsp. griseus (strain JCM 4626 / CBS 651.72 / NBRC 13350 / KCC S-0626 / ISP 5235), this protein is S-adenosylmethionine synthase.